A 257-amino-acid chain; its full sequence is Hydroxyacylglutathione hydrolase (257 aa).

Residues His58, His60, Asp62, His63, His116, Asp135, and His173 each coordinate Zn(2+).

It belongs to the metallo-beta-lactamase superfamily. Glyoxalase II family. In terms of assembly, monomer. Zn(2+) serves as cofactor.

The enzyme catalyses an S-(2-hydroxyacyl)glutathione + H2O = a 2-hydroxy carboxylate + glutathione + H(+). It participates in secondary metabolite metabolism; methylglyoxal degradation; (R)-lactate from methylglyoxal: step 2/2. Thiolesterase that catalyzes the hydrolysis of S-D-lactoyl-glutathione to form glutathione and D-lactic acid. This Brucella melitensis biotype 1 (strain ATCC 23456 / CCUG 17765 / NCTC 10094 / 16M) protein is Hydroxyacylglutathione hydrolase.